A 657-amino-acid polypeptide reads, in one-letter code: Penicillin-binding protein activator LpoA (657 aa).

A signal peptide spans M1 to A25. C26 carries the N-palmitoyl cysteine lipid modification. C26 is lipidated: S-diacylglycerol cysteine.

The protein belongs to the LpoA family. In terms of assembly, interacts with PBP1a.

It localises to the cell outer membrane. Functionally, regulator of peptidoglycan synthesis that is essential for the function of penicillin-binding protein 1A (PBP1a). This Yersinia pseudotuberculosis serotype O:1b (strain IP 31758) protein is Penicillin-binding protein activator LpoA.